The following is a 355-amino-acid chain: 3-isopropylmalate dehydrogenase (355 aa).

Residues Arg-90, Arg-100, Arg-128, and Asp-222 each coordinate substrate. Mg(2+) is bound by residues Asp-222, Asp-246, and Asp-250. An NAD(+)-binding site is contributed by 280-292 (GSAPDIAGKGIAN).

Belongs to the isocitrate and isopropylmalate dehydrogenases family. LeuB type 1 subfamily. In terms of assembly, homodimer. Mg(2+) serves as cofactor. Mn(2+) is required as a cofactor.

Its subcellular location is the cytoplasm. The catalysed reaction is (2R,3S)-3-isopropylmalate + NAD(+) = 4-methyl-2-oxopentanoate + CO2 + NADH. It participates in amino-acid biosynthesis; L-leucine biosynthesis; L-leucine from 3-methyl-2-oxobutanoate: step 3/4. Its function is as follows. Catalyzes the oxidation of 3-carboxy-2-hydroxy-4-methylpentanoate (3-isopropylmalate) to 3-carboxy-4-methyl-2-oxopentanoate. The product decarboxylates to 4-methyl-2 oxopentanoate. The chain is 3-isopropylmalate dehydrogenase from Burkholderia mallei (strain ATCC 23344).